The following is a 411-amino-acid chain: Serine--tRNA ligase (411 aa).

226-228 provides a ligand contact to L-serine; the sequence is TSE. Position 257-259 (257-259) interacts with ATP; it reads RKE. Residue glutamate 280 participates in L-serine binding. ATP is bound at residue 344–347; the sequence is EISS. Residue serine 379 coordinates L-serine.

This sequence belongs to the class-II aminoacyl-tRNA synthetase family. Type-1 seryl-tRNA synthetase subfamily. Homodimer. The tRNA molecule binds across the dimer.

It is found in the cytoplasm. It catalyses the reaction tRNA(Ser) + L-serine + ATP = L-seryl-tRNA(Ser) + AMP + diphosphate + H(+). The catalysed reaction is tRNA(Sec) + L-serine + ATP = L-seryl-tRNA(Sec) + AMP + diphosphate + H(+). Its pathway is aminoacyl-tRNA biosynthesis; selenocysteinyl-tRNA(Sec) biosynthesis; L-seryl-tRNA(Sec) from L-serine and tRNA(Sec): step 1/1. Functionally, catalyzes the attachment of serine to tRNA(Ser). Is also able to aminoacylate tRNA(Sec) with serine, to form the misacylated tRNA L-seryl-tRNA(Sec), which will be further converted into selenocysteinyl-tRNA(Sec). The chain is Serine--tRNA ligase from Campylobacter jejuni subsp. jejuni serotype O:6 (strain 81116 / NCTC 11828).